Consider the following 486-residue polypeptide: H2.0-like homeobox protein (486 aa).

Disordered stretches follow at residues 83–173 (ASFQ…SSKD) and 330–486 (KWRH…LGGL). Low complexity predominate over residues 125 to 135 (QQQQQQQQPQQ). The homeobox DNA-binding region spans 276–335 (RSWSRAVFSNLQRKGLEKRFEIQKYVTKPDRKQLAAMLGLTDAQVKVWFQNRRMKWRHSK). Composition is skewed to basic and acidic residues over residues 334 to 349 (SKEA…EAGE) and 363 to 372 (EERSPSRSEG). A compositionally biased stretch (acidic residues) spans 373–383 (EAESESSDPES). Over residues 390-401 (DTERTEGTERSL) the composition is skewed to basic and acidic residues. Residues 409–420 (ASAAGALLAASS) show a composition bias toward low complexity. Positions 421–440 (GGSGGSGGGGGGGFNFGGLS) are enriched in gly residues. Positions 441 to 474 (SGSTTSAGSSGSHSSGGASELLPAPQPSLSSAPK) are enriched in low complexity. Positions 475 to 486 (SPEPVPAPLGGL) are enriched in pro residues.

This sequence belongs to the H2.0 homeobox family.

The protein resides in the nucleus. Functionally, transcription factor required for TBX21/T-bet-dependent maturation of Th1 cells as well as maintenance of Th1-specific gene expression. Involved in embryogenesis and hematopoiesis. The chain is H2.0-like homeobox protein (HLX) from Bos taurus (Bovine).